The chain runs to 417 residues: GTP-binding protein YPT11 (417 aa).

The tract at residues 1–34 (MSQRKRYSLNVVTSPSIPSPTPSAPIRTNESNWE) is disordered. GTP-binding positions include 97 to 104 (GDANVGKT), 228 to 232 (DTAGQ), and 292 to 295 (NKID). S-geranylgeranyl cysteine attachment occurs at residues Cys415 and Cys416.

The protein belongs to the small GTPase superfamily. Rab family. Interacts with MYO2 (via C-terminal tail domain). Interacts with YIF1, YIP3, YIP4 and YIP5.

The protein localises to the endoplasmic reticulum membrane. It is found in the bud tip. Its subcellular location is the bud neck. Its function is as follows. Involved in the positive control of both endoplasmic reticulum (ER) and mitochondrion inheritance during cell divison. Required for the MYO2-dependent retention of newly inherited mitochondria at the bud tip in developing daughter cells. This is GTP-binding protein YPT11 (YPT11) from Saccharomyces cerevisiae (strain RM11-1a) (Baker's yeast).